A 158-amino-acid chain; its full sequence is 6,7-dimethyl-8-ribityllumazine synthase (158 aa).

5-amino-6-(D-ribitylamino)uracil contacts are provided by residues F23, 61–63, and 85–87; these read SFE and AVI. 90-91 is a (2S)-2-hydroxy-3-oxobutyl phosphate binding site; the sequence is ET. H93 (proton donor) is an active-site residue. F118 contacts 5-amino-6-(D-ribitylamino)uracil. R132 provides a ligand contact to (2S)-2-hydroxy-3-oxobutyl phosphate.

It belongs to the DMRL synthase family.

The catalysed reaction is (2S)-2-hydroxy-3-oxobutyl phosphate + 5-amino-6-(D-ribitylamino)uracil = 6,7-dimethyl-8-(1-D-ribityl)lumazine + phosphate + 2 H2O + H(+). The protein operates within cofactor biosynthesis; riboflavin biosynthesis; riboflavin from 2-hydroxy-3-oxobutyl phosphate and 5-amino-6-(D-ribitylamino)uracil: step 1/2. In terms of biological role, catalyzes the formation of 6,7-dimethyl-8-ribityllumazine by condensation of 5-amino-6-(D-ribitylamino)uracil with 3,4-dihydroxy-2-butanone 4-phosphate. This is the penultimate step in the biosynthesis of riboflavin. The polypeptide is 6,7-dimethyl-8-ribityllumazine synthase (Prochlorococcus marinus (strain MIT 9515)).